The primary structure comprises 691 residues: Pleckstrin homology domain-containing family G member 7 (691 aa).

2 disordered regions span residues 1 to 48 (MEKT…ISTS) and 109 to 140 (TSEPERALNAADSLEPQTRPTDKYLPPELQPV). One can recognise a DH domain in the interval 313-488 (MIFMNTLRYL…EGKVKWLDNF (176 aa)). N-linked (GlcNAc...) asparagine glycosylation is present at asparagine 395. In terms of domain architecture, PH spans 535–668 (HLLYEGKLTL…WMAQITTAIS (134 aa)).

This Homo sapiens (Human) protein is Pleckstrin homology domain-containing family G member 7.